We begin with the raw amino-acid sequence, 404 residues long: Glutamyl-tRNA reductase (404 aa).

Residues 47–50, Ser-94, 99–101, and Gln-105 contribute to the substrate site; these read TCNR and EQE. Cys-48 acts as the Nucleophile in catalysis. 174-179 contributes to the NADP(+) binding site; that stretch reads GAGEMG.

Homotetramer.

It catalyses the reaction (S)-4-amino-5-oxopentanoate + tRNA(Glu) + NADP(+) = L-glutamyl-tRNA(Glu) + NADPH + H(+). It participates in porphyrin-containing compound metabolism; protoporphyrin-IX biosynthesis; 5-aminolevulinate from L-glutamyl-tRNA(Glu): step 1/2. Its activity is regulated as follows. Inhibited by heavy metal compounds, Zn(2+), and heme. Also competitively inhibited by glutamycin. In terms of biological role, catalyzes the NADPH-dependent reduction of glutamyl-tRNA(Glu) to glutamate 1-semialdehyde (GSA). In the absence of NADPH, exhibits substrate esterase activity, leading to the release of glutamate from tRNA. This is Glutamyl-tRNA reductase (hemA) from Methanopyrus kandleri (strain AV19 / DSM 6324 / JCM 9639 / NBRC 100938).